We begin with the raw amino-acid sequence, 356 residues long: sn-glycerol-3-phosphate import ATP-binding protein UgpC (356 aa).

The 232-residue stretch at 4-235 (LKLQAVTKSW…PASLFVASFI (232 aa)) folds into the ABC transporter domain. 37–44 (GPSGCGKS) is an ATP binding site.

It belongs to the ABC transporter superfamily. sn-glycerol-3-phosphate importer (TC 3.A.1.1.3) family. As to quaternary structure, the complex is composed of two ATP-binding proteins (UgpC), two transmembrane proteins (UgpA and UgpE) and a solute-binding protein (UgpB).

The protein resides in the cell inner membrane. It carries out the reaction sn-glycerol 3-phosphate(out) + ATP + H2O = sn-glycerol 3-phosphate(in) + ADP + phosphate + H(+). Functionally, part of the ABC transporter complex UgpBAEC involved in sn-glycerol-3-phosphate (G3P) import. Responsible for energy coupling to the transport system. This is sn-glycerol-3-phosphate import ATP-binding protein UgpC from Escherichia coli O6:H1 (strain CFT073 / ATCC 700928 / UPEC).